The following is a 716-amino-acid chain: MTVQLTDDAYAVLEGRHADPFRYLGPHPEDDRVVVRALLPDATAVEAVGEHGETAILERVHDAGLFAGPLPNGSHRYQLRARFGDTTVDLEDPYRFPPILTEFDLYLLGEGTDQRLYDKLGAHPMVLEGVRGVGFVVLAPNARRVSVVGDFNFWNPRRHQMRVRGNGYWELFIPGATAGDHYKFDMTGPNGETLPQKSDPMAFAAEMRPKTASIVVDQTRLPLPRPAPDNINALGAPMSIYEVHLGSWRRKDGEQWLTYRELAEQLPAYVRDMGFTHVEFLPVSEHPFDGSWGYQPTGLFAPTSRFGTPEDFCALIDACHEHGIGVLLDWVPGHFPDDPHGLGNFDGTALYEHANPLQGRHLDWGTLIYNYGRTEVVNFLVSNALFWLERYRIDGLRVDAVASMLYLDYSRPAGGWIPNKFGGRENIEAIDFLRRFNAEVYAKFPQATTAAEESTAWPQVSRPVEFGGLGFGYKWNMGWMHDTLNYISKDPIHRKYHHGQILFGLHYAFSENFILPLSHDEVVHGKRSILGRMPGDEWQRFANLRAYYAFMFAHPGKKLMFMGSEFGQEREWNHDRSLDWHLLDTPKYAGIQALVRDLNRLYRDLPALHQLDCDPFGFEWIITEDAARNVFAWMRKGNDTRARCLVIVNFSPNVYQDYRVRVPFPGRWREVLNSDAAIYGGSNVGNAGEVRTLEGLVPELSLNIPPLAAIFLKPED.

The active-site Nucleophile is the aspartate 399. Glutamate 452 acts as the Proton donor in catalysis.

Belongs to the glycosyl hydrolase 13 family. GlgB subfamily. Monomer.

It catalyses the reaction Transfers a segment of a (1-&gt;4)-alpha-D-glucan chain to a primary hydroxy group in a similar glucan chain.. The protein operates within glycan biosynthesis; glycogen biosynthesis. Functionally, catalyzes the formation of the alpha-1,6-glucosidic linkages in glycogen by scission of a 1,4-alpha-linked oligosaccharide from growing alpha-1,4-glucan chains and the subsequent attachment of the oligosaccharide to the alpha-1,6 position. This is 1,4-alpha-glucan branching enzyme GlgB from Rhodopseudomonas palustris (strain HaA2).